The primary structure comprises 359 residues: Protein RecA (359 aa).

Gly-74–Thr-81 serves as a coordination point for ATP.

The protein belongs to the RecA family.

It is found in the cytoplasm. Functionally, can catalyze the hydrolysis of ATP in the presence of single-stranded DNA, the ATP-dependent uptake of single-stranded DNA by duplex DNA, and the ATP-dependent hybridization of homologous single-stranded DNAs. It interacts with LexA causing its activation and leading to its autocatalytic cleavage. This chain is Protein RecA, found in Anaplasma marginale (strain Florida).